The following is a 422-amino-acid chain: Ubiquitin-conjugating enzyme E2 Q1 (422 aa).

Position 1 is an N-acetylmethionine (Met1). A compositionally biased stretch (low complexity) spans Met1 to Gly15. 2 disordered regions span residues Met1 to Cys40 and Pro174 to Gly221. The span at Gln16–Pro35 shows a compositional bias: gly residues. Over residues Val185–Asp200 the composition is skewed to acidic residues. The span at Ala212–Gly221 shows a compositional bias: basic and acidic residues. The UBC core domain maps to Gln251–Tyr415. The active-site Glycyl thioester intermediate is the Cys351.

The protein belongs to the ubiquitin-conjugating enzyme family. Monomer and homodimer. Only the homodimer is linked to ubiquitin through thiolester activation. Interacts (via N-terminus) with B4GALT1 (via N-terminal cytoplasmic domain). The interaction is direct. Post-translationally, autoubiquitinated in vitro in the presence of NEDD4L. As to expression, widely expressed.

Its subcellular location is the nucleus. It localises to the cell projection. It is found in the filopodium. The protein resides in the cytoplasm. The protein localises to the cytosol. The catalysed reaction is S-ubiquitinyl-[E1 ubiquitin-activating enzyme]-L-cysteine + [E2 ubiquitin-conjugating enzyme]-L-cysteine = [E1 ubiquitin-activating enzyme]-L-cysteine + S-ubiquitinyl-[E2 ubiquitin-conjugating enzyme]-L-cysteine.. It functions in the pathway protein modification; protein ubiquitination. Its function is as follows. Catalyzes the covalent attachment of ubiquitin to other proteins. May be involved in hormonal homeostasis in females. Involved in regulation of B4GALT1 cell surface expression, B4GALT1-mediated cell adhesion to laminin and embryoid body formation. This Homo sapiens (Human) protein is Ubiquitin-conjugating enzyme E2 Q1 (UBE2Q1).